A 958-amino-acid polypeptide reads, in one-letter code: Glycine dehydrogenase (decarboxylating) (958 aa).

Lys-705 bears the N6-(pyridoxal phosphate)lysine mark.

Belongs to the GcvP family. The glycine cleavage system is composed of four proteins: P, T, L and H. Pyridoxal 5'-phosphate serves as cofactor.

The catalysed reaction is N(6)-[(R)-lipoyl]-L-lysyl-[glycine-cleavage complex H protein] + glycine + H(+) = N(6)-[(R)-S(8)-aminomethyldihydrolipoyl]-L-lysyl-[glycine-cleavage complex H protein] + CO2. In terms of biological role, the glycine cleavage system catalyzes the degradation of glycine. The P protein binds the alpha-amino group of glycine through its pyridoxal phosphate cofactor; CO(2) is released and the remaining methylamine moiety is then transferred to the lipoamide cofactor of the H protein. This is Glycine dehydrogenase (decarboxylating) from Synechococcus sp. (strain CC9902).